We begin with the raw amino-acid sequence, 142 residues long: Large ribosomal subunit protein mL42 (142 aa).

Residues methionine 1–histidine 32 constitute a mitochondrion transit peptide.

It belongs to the mitochondrion-specific ribosomal protein mL42 family. As to quaternary structure, component of the mitochondrial ribosome large subunit (39S) which comprises a 16S rRNA and about 50 distinct proteins. Component of the mitochondrial ribosome small subunit (28S) which comprises a 12S rRNA and about 30 distinct proteins.

Its subcellular location is the mitochondrion. In Bos taurus (Bovine), this protein is Large ribosomal subunit protein mL42 (MRPL42).